The primary structure comprises 860 residues: MQEQYRPEDIEQTIQEHWEKNNTFKVTEDNNKEKYYCLSMLPYPSGRLHMGHVRNYTIGDVISRYQRMLGKNVLQPIGWDAFGLPAEGAAVKNNTAPAPWTYENINYMKGQLKKLGFGYDWDREVTTCTPEYYRWEQWFFTKLYEKGLVYKKTSAVNWCPHDLTVLANEQVIDGCCWRCDTPVERKEIPQWFIKITDYAEELLNDLDTLDEWPEQVKTMQRNWIGRSEGVEITFDVADSDDTMTVYTTRPDTFMGVTYVAVAAGHPLAQKAAQNNPEIQHFIDECRNMKMAEAEMATMEKKGIATGLYAIHPLTQEKVAIWVANFVLMEYGTGAVMAVPGHDERDWEFATKYGLPIKAVIADAEGNQPDLSTGALTEKNSLINSGEFSGLDNQAGFNAIADKLTAMGVGERKVNYRLRDWGVSRQRYWGAPIPMATLEDGSVVPVPDDQLPVILPEDVKMDGITSPIKADPEWAKTTINGQPALRETDTFDTFMESSWYYARYTCPDYDKGMLDPKAANYWLPVDWYIGGIEHAIMHLMYFRFFHKLMRDAGLVNSDEPAKRLLCQGMVLADAFYYTGEDGARHWVSPAEAIVERDEKNRIIKATDSAGHELTYAGMSKMSKSKNNGIDPQTMVERYGADTVRLFMMFAAPPELTLEWQESSVEGANRFLRRLWRLVHEHTEKGTTQSLDLATLTTEQKDLRRDLHKTIAKVSDDVGRRLAFNTAIAAIMELMNKLTRAPQETEQDRALMQEALEAVVRMLSPIIPHACFVMWQALGGKEDIDVAPWPVADEEAMVDDTKLIIVQVNGKVRGRITVPANSEKDYVQEMATKEYSVAKYLENVTVRKVIYVPGKLLNIVVG.

Residues 42–52 (PYPSGRLHMGH) carry the 'HIGH' region motif. Positions 619–623 (KMSKS) match the 'KMSKS' region motif. K622 is a binding site for ATP.

Belongs to the class-I aminoacyl-tRNA synthetase family.

It is found in the cytoplasm. It catalyses the reaction tRNA(Leu) + L-leucine + ATP = L-leucyl-tRNA(Leu) + AMP + diphosphate. This Proteus mirabilis (strain HI4320) protein is Leucine--tRNA ligase.